Reading from the N-terminus, the 505-residue chain is Flagellin (505 aa).

Belongs to the bacterial flagellin family.

The protein resides in the secreted. It is found in the bacterial flagellum. Flagellin is the subunit protein which polymerizes to form the filaments of bacterial flagella. This is Flagellin (fliC) from Salmonella montevideo.